Consider the following 180-residue polypeptide: Large ribosomal subunit protein uL6 (180 aa).

Belongs to the universal ribosomal protein uL6 family. Part of the 50S ribosomal subunit.

In terms of biological role, this protein binds to the 23S rRNA, and is important in its secondary structure. It is located near the subunit interface in the base of the L7/L12 stalk, and near the tRNA binding site of the peptidyltransferase center. This chain is Large ribosomal subunit protein uL6, found in Borrelia garinii subsp. bavariensis (strain ATCC BAA-2496 / DSM 23469 / PBi) (Borreliella bavariensis).